Here is a 405-residue protein sequence, read N- to C-terminus: Palmitoyltransferase PFA3 (405 aa).

The Cytoplasmic portion of the chain corresponds to 1 to 27 (MLISHPRIMIRHAPWVTSIETFCCSLA). The helical transmembrane segment at 28-48 (TLFPKVFYTSVLTWSVYALIV) threads the bilayer. Over 49–62 (HGCYDTLMTTQETS) the chain is Lumenal. A helical membrane pass occupies residues 63 to 83 (IFAIAIGLIGLTLYILCLYTY). Topologically, residues 84–214 (FKVLRAGPGS…GFYNHKFFAQ (131 aa)) are cytoplasmic. Residues 167 to 217 (RYCTKCSVWKPDRCHHCSTCNRCVLRMDHHCPWFAMCVGFYNHKFFAQFLM) enclose the DHHC domain. A helical transmembrane segment spans residues 215–235 (FLMYLTAYSGFDFVVSLSILW). The Lumenal portion of the chain corresponds to 236 to 251 (KFFADEKYNDHYLSLN). Residues 252 to 272 (LVFLFVLSLAFFITVGGFSAF) traverse the membrane as a helical segment. The Cytoplasmic portion of the chain corresponds to 273 to 405 (SLYLVFRNKT…ANQTTDTNPF (133 aa)).

It belongs to the DHHC palmitoyltransferase family. PFA3 subfamily. Autopalmitoylated.

It is found in the vacuole membrane. The catalysed reaction is L-cysteinyl-[protein] + hexadecanoyl-CoA = S-hexadecanoyl-L-cysteinyl-[protein] + CoA. Palmitoyltransferase specific for VAC8. Palmitoylates VAC8 at one or more of its N-terminal cysteine residues, which is required for its proper membrane localization. This chain is Palmitoyltransferase PFA3 (PFA3), found in Debaryomyces hansenii (strain ATCC 36239 / CBS 767 / BCRC 21394 / JCM 1990 / NBRC 0083 / IGC 2968) (Yeast).